The following is a 430-amino-acid chain: Retinoic acid receptor RXR-alpha-A (430 aa).

Positions 1 to 20 (MHPSLLSPTSLGPSGSLHSP) are enriched in low complexity. Disordered stretches follow at residues 1-25 (MHPS…STLS) and 48-73 (ASPG…SSSE). The interval 1-99 (MHPSLLSPTS…QPSGTPLSLT (99 aa)) is modulating. The span at 58-72 (ISPQLNSHMNSVSSS) shows a compositional bias: polar residues. Positions 100–175 (KHICAICGDR…MGMKREAVQE (76 aa)) form a DNA-binding region, nuclear receptor. The Zn(2+) site is built by cysteine 103, cysteine 106, cysteine 120, and cysteine 123. An NR C4-type zinc finger spans residues 103–123 (CAICGDRSSGKHYGVYSCEGC). Positions 128 to 133 (KRTVRK) are nuclear localization signal. The Zn(2+) site is built by cysteine 139, cysteine 145, cysteine 155, and cysteine 158. An NR C4-type zinc finger spans residues 139–158 (CRDNKDCVIDKRQRNRCQYC). Basic and acidic residues predominate over residues 174-186 (QEERQRAKERSEN). Residues 174-196 (QEERQRAKERSENEVESTSSANE) are disordered. The hinge stretch occupies residues 176 to 192 (ERQRAKERSENEVESTS). In terms of domain architecture, NR LBD spans 195 to 426 (NEDMPVEKIL…TFLMEMLEAP (232 aa)). Residues arginine 284 and alanine 295 each coordinate 9-cis-retinoate. Arginine 284 and alanine 295 together coordinate all-trans-retinoate. The required for nuclear export stretch occupies residues 316–336 (RVLTELVSKMRDMQMDKTELG). The interval 415–426 (IDTFLMEMLEAP) is AF-2.

This sequence belongs to the nuclear hormone receptor family. NR2 subfamily. As to quaternary structure, homodimer. Heterodimer; with a rar molecule. Binds DNA preferentially as a rar/rxr heterodimer.

The protein resides in the nucleus. Functionally, receptor for retinoic acid that acts as a transcription factor. Forms homo- or heterodimers with retinoic acid receptors (rars) and binds to target response elements in response to their ligands, all-trans or 9-cis retinoic acid, to regulate gene expression in various biological processes. The rar/rxr heterodimers bind to the retinoic acid response elements (RARE) composed of tandem 5'-AGGTCA-3' sites known as DR1-DR5 to regulate transcription. The high affinity ligand for rxrs is 9-cis retinoic acid. In the absence of ligand, the rar/rxr heterodimers associate with a multiprotein complex containing transcription corepressors that induce histone deacetylation, chromatin condensation and transcriptional suppression. On ligand binding, the corepressors dissociate from the receptors and coactivators are recruited leading to transcriptional activation. The polypeptide is Retinoic acid receptor RXR-alpha-A (Danio rerio (Zebrafish)).